Consider the following 200-residue polypeptide: Beta-1,6-glucan synthesis-associated protein KEG1 (200 aa).

Residues 1-15 (MAGIKLTHKLYQYYQ) lie on the Lumenal side of the membrane. The chain crosses the membrane as a helical span at residues 16–36 (LATSFLYAALLIRWLILMPLV). Residues 37-44 (GSRFLPGG) are Cytoplasmic-facing. Residues 45–65 (IHEFLIYLMFYSSIMEVIWLL) traverse the membrane as a helical segment. Residues 66–82 (RFHGFKYGLLSRTFLKD) lie on the Lumenal side of the membrane. A helical membrane pass occupies residues 83–103 (LNFIYLVSVIHFYDDYEHALI). The Cytoplasmic segment spans residues 104-145 (LKNASYSSFIISLSLSQAYCHWCKLFKRKGVKERTLVWKVNT). The chain crosses the membrane as a helical span at residues 146–166 (FVTLPILYLSEFALLLLNIQV). At 167-173 (KNYHSTP) the chain is on the lumenal side. The helical transmembrane segment at 174 to 194 (TLDIINRVVLLAYFPVLLTAY) threads the bilayer. The Cytoplasmic segment spans residues 195–200 (KKLLTK).

Interacts with KRE6.

The protein localises to the endoplasmic reticulum membrane. Involved in the biosynthesis of (1-&gt;6)-beta-D-glucan polymers of the cell wall. Required for viability. Involved in maintaining chromosome stability. The polypeptide is Beta-1,6-glucan synthesis-associated protein KEG1 (KEG1) (Saccharomyces cerevisiae (strain ATCC 204508 / S288c) (Baker's yeast)).